The following is a 1295-amino-acid chain: Protein FORGETTER 1 (1295 aa).

Composition is skewed to pro residues over residues 1–14 (MTQSPVQPPPPLPA), 75–89 (PQQPPQPIQTLPPPI), and 162–177 (PPTPAAPTVPPPPPPE). Disordered regions lie at residues 1–20 (MTQSPVQPPPPLPAQPHSAA), 68–107 (RPQFPQSPQQPPQPIQTLPPPIQQQLKPLNLPRPPVPAHG), 153–204 (LTAS…MDYR), and 626–688 (PEQP…NDSD). Over residues 178 to 193 (EVNEEAIEVEREEDEG) the composition is skewed to acidic residues. Positions 643–650 (RKRHSASP) match the Nuclear localization signal motif. Residues 669–688 (DNESDLESEADSADDSNDSD) are compositionally biased toward acidic residues. Residues 691–741 (FQICQICSGEDERKKLLHCSECDKLFHPDCVVPPVIDLPSEAWICFSCKEK) form a PHD-type zinc finger.

This sequence belongs to the SBNO family. As to quaternary structure, interacts with SWI/SNF and ISWI chromatin remodelers such as BRM, CHR11 and CHR17. Binds to histone H3.

The protein localises to the nucleus. Functionally, required for normal embryo development. Necessary to acquire heat stress (HS) memory, by modulating nucleosome occupancy and regulating heat-induced gene expression. Associates globally with the nucleosome-poor regions flanking the transcription units of expressed genes. Binds to the promoter regions, primarily to the proximal promoter just upstream of the transcriptional start sites (TSS) and somewhat more weakly to the region downstream of the transcription termination site (TTS), of actively expressed genes (e.g. HSA32, HSP18.2 and HSP22.0) in a heat-dependent fashion. This Arabidopsis thaliana (Mouse-ear cress) protein is Protein FORGETTER 1.